The primary structure comprises 220 residues: Large ribosomal subunit protein uL3 (220 aa).

The tract at residues 61–81 (KGSKSNKYANKPAEGHAKKAD) is disordered.

The protein belongs to the universal ribosomal protein uL3 family. In terms of assembly, part of the 50S ribosomal subunit. Forms a cluster with proteins L14 and L19.

In terms of biological role, one of the primary rRNA binding proteins, it binds directly near the 3'-end of the 23S rRNA, where it nucleates assembly of the 50S subunit. This chain is Large ribosomal subunit protein uL3, found in Staphylococcus epidermidis (strain ATCC 12228 / FDA PCI 1200).